The primary structure comprises 400 residues: Methylthioribose kinase (400 aa).

Residues Asn-40, Lys-57, and Glu-111–Leu-113 contribute to the ATP site. Asp-229 is a substrate binding site. Asp-246–Glu-248 is a binding site for ATP. Arg-344 is a binding site for substrate.

Belongs to the methylthioribose kinase family. In terms of assembly, homodimer.

The enzyme catalyses 5-(methylsulfanyl)-D-ribose + ATP = 5-(methylsulfanyl)-alpha-D-ribose 1-phosphate + ADP + H(+). It participates in amino-acid biosynthesis; L-methionine biosynthesis via salvage pathway; S-methyl-5-thio-alpha-D-ribose 1-phosphate from S-methyl-5'-thioadenosine (hydrolase route): step 2/2. Catalyzes the phosphorylation of methylthioribose into methylthioribose-1-phosphate. In Pectobacterium carotovorum subsp. carotovorum (strain PC1), this protein is Methylthioribose kinase.